Consider the following 245-residue polypeptide: MNSFNIDVITLLPKAFELIKNLGVITRALDKNLINVNLHDLREYGEGSYRQVDDKPYGGGAGMVLKPGPIFKAHESINKFPKSKTLLMTPQGKVLKQKDFVRWSTLDQIIIICGQYEGFDERVRCLADEEISIGDYVLSGGEIPALSIINGLTRLLPGTLGDPDSLVNESHNSPLLEHPQYTRPQIFRDMKVPDVLINGNHKEIELWREERMLKRTIKRRKDLIKNEFCDLPIDEYDGDDWLWDL.

Residues Gly114 and 133–138 each bind S-adenosyl-L-methionine; that span reads IGDYVL.

Belongs to the RNA methyltransferase TrmD family. As to quaternary structure, homodimer.

Its subcellular location is the cytoplasm. The enzyme catalyses guanosine(37) in tRNA + S-adenosyl-L-methionine = N(1)-methylguanosine(37) in tRNA + S-adenosyl-L-homocysteine + H(+). In terms of biological role, specifically methylates guanosine-37 in various tRNAs. In Prochlorococcus marinus (strain MIT 9312), this protein is tRNA (guanine-N(1)-)-methyltransferase.